A 296-amino-acid chain; its full sequence is Stanniocalcin-2 (296 aa).

The first 24 residues, Met1–Gly24, serve as a signal peptide directing secretion. The tract at residues Ala22–Arg44 is disordered. N-linked (GlcNAc...) asparagine glycosylation is present at Asn73. The tract at residues Arg236–Arg296 is disordered. Basic and acidic residues predominate over residues Tyr238–Ser258.

This sequence belongs to the stanniocalcin family. In terms of assembly, homodimer; disulfide-linked. In terms of tissue distribution, expressed in a variety of tissues. Strongly expressed in ovary and to a lesser extent in kidney.

It is found in the secreted. Has an anti-hypocalcemic action on calcium and phosphate homeostasis. The protein is Stanniocalcin-2 (Stc2) of Rattus norvegicus (Rat).